The chain runs to 481 residues: (S)-N-methylcoclaurine 3'-hydroxylase isozyme 1 (481 aa).

A heme-binding site is contributed by C423.

It belongs to the cytochrome P450 family. Heme is required as a cofactor. In terms of tissue distribution, restricted to the parietal region of sieve elements adjacent or proximal to laticifers in roots, stems, leaves, carpels and hypocotyls.

It localises to the endoplasmic reticulum. It catalyses the reaction (S)-N-methylcoclaurine + reduced [NADPH--hemoprotein reductase] + O2 = (S)-3'-hydroxy-N-methylcoclaurine + oxidized [NADPH--hemoprotein reductase] + H2O + H(+). It participates in alkaloid biosynthesis; (S)-reticuline biosynthesis; (S)-reticuline from (S)-norcoclaurine: step 3/4. Functionally, cytochrome P450 monooxygenase involved in the biosynthesis of benzylisoquinoline alkaloids. Catalyzes the 3'-hydroxylation of (S)-N-methylcoclaurine. This Papaver somniferum (Opium poppy) protein is (S)-N-methylcoclaurine 3'-hydroxylase isozyme 1.